We begin with the raw amino-acid sequence, 150 residues long: Large ribosomal subunit protein bL9 (150 aa).

The protein belongs to the bacterial ribosomal protein bL9 family.

Functionally, binds to the 23S rRNA. In Pseudoalteromonas atlantica (strain T6c / ATCC BAA-1087), this protein is Large ribosomal subunit protein bL9.